The sequence spans 871 residues: Probable receptor-like protein kinase At2g21480 (871 aa).

Positions 1–39 are cleaved as a signal peptide; it reads MEIRKKPNIPMCLVLDSSSRPFMTLLFTILLFLTGLASA. Residues 40 to 439 lie on the Extracellular side of the membrane; that stretch reads VGAVGGSPTA…GQRASMGKQG (400 aa). Asn-169, Asn-182, Asn-253, Asn-316, and Asn-381 each carry an N-linked (GlcNAc...) asparagine glycan. Residues 440–460 form a helical membrane-spanning segment; that stretch reads MVATAGFVMMFGAFVGLGAMV. Over 461–871 the chain is Cytoplasmic; sequence YKWKKRPQDW…FTQFASLNGR (411 aa). The Protein kinase domain maps to 525-797; it reads FDASEIIGVG…GDVLWNLEYA (273 aa). ATP is bound by residues 531 to 539 and Lys-553; that span reads IGVGGFGNV. The active-site Proton acceptor is Asp-649. Residues 808–871 form a disordered region; it reads KAEAEEVETP…FTQFASLNGR (64 aa). Residues 817–839 show a composition bias toward low complexity; the sequence is PKPVAVPAAAPTSPAATTAAASE. Positions 854–871 are enriched in polar residues; that stretch reads DQHSGTTMFTQFASLNGR.

The protein belongs to the protein kinase superfamily. Ser/Thr protein kinase family.

It is found in the membrane. The sequence is that of Probable receptor-like protein kinase At2g21480 from Arabidopsis thaliana (Mouse-ear cress).